The following is a 179-amino-acid chain: Deoxyuridine 5'-triphosphate nucleotidohydrolase, mitochondrial (179 aa).

The transit peptide at 1-41 (MPIEQKYFSLFSNLFKRLTTNNNNNNYLKMAPPNFETFKVK) directs the protein to the mitochondrion. Residues 97 to 99 (RSG), 111 to 114 (GVID), glycine 122, arginine 165, and 170 to 171 (FG) each bind dUTP.

It belongs to the dUTPase family. Homotrimer. Requires Mg(2+) as cofactor.

Its subcellular location is the mitochondrion. It carries out the reaction dUTP + H2O = dUMP + diphosphate + H(+). The protein operates within pyrimidine metabolism; dUMP biosynthesis; dUMP from dCTP (dUTP route): step 2/2. Its function is as follows. This enzyme is involved in nucleotide metabolism: it produces dUMP, the immediate precursor of thymidine nucleotides and it decreases the intracellular concentration of dUTP so that uracil cannot be incorporated into DNA. The polypeptide is Deoxyuridine 5'-triphosphate nucleotidohydrolase, mitochondrial (dut) (Dictyostelium discoideum (Social amoeba)).